A 202-amino-acid polypeptide reads, in one-letter code: Endothelin-1 (202 aa).

Positions 1–25 (MDYFPMIFALLFVAFQGAPEAAVLG) are cleaved as a signal peptide. The propeptide occupies 26 to 50 (TELSAGAEDGGEKPAPATPWRPRRS). Disulfide bonds link cysteine 53-cysteine 67 and cysteine 55-cysteine 63. The propeptide occupies 74–202 (VNTPEHVVPY…DKKVIYNRAH (129 aa)). Residues 110–124 (CQCASQTDKKCWNFC) form an endothelin-like region.

Belongs to the endothelin/sarafotoxin family.

It localises to the secreted. Endothelins are endothelium-derived vasoconstrictor peptides. Probable ligand for G-protein coupled receptors EDNRA and EDNRB which activates PTK2B, BCAR1, BCAR3 and, GTPases RAP1 and RHOA cascade in glomerular mesangial cells. Also binds the DEAR/FBXW7-AS1 receptor. Promotes mesenteric arterial wall remodeling via activation of ROCK signaling and subsequent colocalization of NFATC3 with F-actin filaments. NFATC3 then translocates to the nucleus where it subsequently promotes the transcription of the smooth muscle hypertrophy and differentiation marker ACTA2. In Bos taurus (Bovine), this protein is Endothelin-1 (EDN1).